Reading from the N-terminus, the 483-residue chain is GTPase Der (483 aa).

2 EngA-type G domains span residues 3-167 and 212-387; these read FTLA…GEER and LRIA…EIWN. GTP is bound by residues 9–16, 56–60, 119–122, 218–225, 265–269, and 330–333; these read GRPNVGKS, DTAGL, NKAE, GRPNAGKS, DTAGM, and NKWD. The KH-like domain occupies 388–472; it reads RRISTGRLNR…PIRLSLRTSD (85 aa).

Belongs to the TRAFAC class TrmE-Era-EngA-EngB-Septin-like GTPase superfamily. EngA (Der) GTPase family. Associates with the 50S ribosomal subunit.

GTPase that plays an essential role in the late steps of ribosome biogenesis. In Brucella suis biovar 1 (strain 1330), this protein is GTPase Der.